Reading from the N-terminus, the 33-residue chain is NAD-reducing hydrogenase HoxS subunit gamma (33 aa).

A 2Fe-2S ferredoxin-type domain is found at 1–33; it reads SIEIEIDGVTVTTEESRTLVDVAAEAGVYIPTL.

This sequence belongs to the complex I 75 kDa subunit family. Tetramer of an alpha and a gamma subunits (flavin-containing dimer), and a delta and a nickel-containing beta subunits (hydrogenase dimer). Requires [4Fe-4S] cluster as cofactor.

The protein localises to the cytoplasm. It catalyses the reaction H2 + NAD(+) = NADH + H(+). Functionally, subunits alpha and gamma of HoxS constitute an NADH--oxidoreductase. This Rhodococcus opacus (Nocardia opaca) protein is NAD-reducing hydrogenase HoxS subunit gamma (hoxU).